The primary structure comprises 468 residues: Phosphoglucosamine mutase (468 aa).

S112 acts as the Phosphoserine intermediate in catalysis. The Mg(2+) site is built by S112, D254, D256, and D258. At S112 the chain carries Phosphoserine.

It belongs to the phosphohexose mutase family. The cofactor is Mg(2+). In terms of processing, activated by phosphorylation.

It catalyses the reaction alpha-D-glucosamine 1-phosphate = D-glucosamine 6-phosphate. Its function is as follows. Catalyzes the conversion of glucosamine-6-phosphate to glucosamine-1-phosphate. This is Phosphoglucosamine mutase from Prochlorococcus marinus (strain MIT 9303).